A 211-amino-acid chain; its full sequence is Large ribosomal subunit protein uL4 (211 aa).

A compositionally biased stretch (polar residues) spans 41–53 (QAHSRQGTASTLT). The interval 41–78 (QAHSRQGTASTLTRAEVRGGGRKPYKQKGTGRARQGTI) is disordered. The segment covering 60-71 (GGRKPYKQKGTG) has biased composition (basic residues).

Belongs to the universal ribosomal protein uL4 family. As to quaternary structure, part of the 50S ribosomal subunit.

Functionally, one of the primary rRNA binding proteins, this protein initially binds near the 5'-end of the 23S rRNA. It is important during the early stages of 50S assembly. It makes multiple contacts with different domains of the 23S rRNA in the assembled 50S subunit and ribosome. In terms of biological role, forms part of the polypeptide exit tunnel. The chain is Large ribosomal subunit protein uL4 from Prochlorococcus marinus (strain MIT 9313).